The chain runs to 241 residues: Putative lipoprotein YvcA (241 aa).

The signal sequence occupies residues 1–18; it reads MKKIIFICFSLLLALTGG. Cys-19 is lipidated: N-palmitoyl cysteine. Cys-19 is lipidated: S-diacylglycerol cysteine. Residues 22 to 48 are disordered; sequence NDNDKNSTNDNKTEAVKPKDMDPKDLP. Positions 23–46 are enriched in basic and acidic residues; it reads DNDKNSTNDNKTEAVKPKDMDPKD.

The protein localises to the cell membrane. In terms of biological role, required for complex colony architecture. This is Putative lipoprotein YvcA (yvcA) from Bacillus subtilis (strain 168).